Here is a 212-residue protein sequence, read N- to C-terminus: 3-demethoxyubiquinol 3-hydroxylase (212 aa).

Residues 21 to 42 (SRMSRPLPVPQESAVTEAAPEL) form a disordered region. Fe cation-binding residues include Glu61, Glu91, His94, Glu143, Glu175, and His178.

This sequence belongs to the COQ7 family. Requires Fe cation as cofactor.

It localises to the cell membrane. It catalyses the reaction a 5-methoxy-2-methyl-3-(all-trans-polyprenyl)benzene-1,4-diol + AH2 + O2 = a 3-demethylubiquinol + A + H2O. The protein operates within cofactor biosynthesis; ubiquinone biosynthesis. Catalyzes the hydroxylation of 2-nonaprenyl-3-methyl-6-methoxy-1,4-benzoquinol during ubiquinone biosynthesis. In Paraburkholderia xenovorans (strain LB400), this protein is 3-demethoxyubiquinol 3-hydroxylase.